Here is a 130-residue protein sequence, read N- to C-terminus: Large ribosomal subunit protein bL21 (130 aa).

Residues 103–130 are disordered; the sequence is AGGKTSKAEPRKTRKAEPAAESAPAAAE. Over residues 108–120 the composition is skewed to basic and acidic residues; the sequence is SKAEPRKTRKAEP. Over residues 121–130 the composition is skewed to low complexity; sequence AAESAPAAAE.

The protein belongs to the bacterial ribosomal protein bL21 family. Part of the 50S ribosomal subunit. Contacts protein L20.

Its function is as follows. This protein binds to 23S rRNA in the presence of protein L20. This is Large ribosomal subunit protein bL21 from Methylorubrum extorquens (strain CM4 / NCIMB 13688) (Methylobacterium extorquens).